Consider the following 41-residue polypeptide: Large ribosomal subunit protein bL36 (41 aa).

It belongs to the bacterial ribosomal protein bL36 family.

In Xylella fastidiosa (strain M23), this protein is Large ribosomal subunit protein bL36.